Here is a 96-residue protein sequence, read N- to C-terminus: Acylphosphatase (96 aa).

Residues 11–96 enclose the Acylphosphatase-like domain; it reads ARRWYVRGRV…ITSYDSFRIR (86 aa). Catalysis depends on residues arginine 26 and asparagine 44.

This sequence belongs to the acylphosphatase family.

The catalysed reaction is an acyl phosphate + H2O = a carboxylate + phosphate + H(+). The sequence is that of Acylphosphatase (acyP) from Solibacter usitatus (strain Ellin6076).